Consider the following 320-residue polypeptide: Cytochrome f (320 aa).

Residues 1 to 35 (MQTRNNFSWIKEQITRSISVSLMIYIITRASISNA) form the signal peptide. Residues Tyr-36, Cys-56, Cys-59, and His-60 each contribute to the heme site. A helical membrane pass occupies residues 286-306 (VQGLLFFLASVILAQIFLVLK).

This sequence belongs to the cytochrome f family. As to quaternary structure, the 4 large subunits of the cytochrome b6-f complex are cytochrome b6, subunit IV (17 kDa polypeptide, petD), cytochrome f and the Rieske protein, while the 4 small subunits are PetG, PetL, PetM and PetN. The complex functions as a dimer. The cofactor is heme.

It is found in the plastid. Its subcellular location is the chloroplast thylakoid membrane. Its function is as follows. Component of the cytochrome b6-f complex, which mediates electron transfer between photosystem II (PSII) and photosystem I (PSI), cyclic electron flow around PSI, and state transitions. In Lactuca sativa (Garden lettuce), this protein is Cytochrome f.